The following is a 388-amino-acid chain: MSKEYLFTSESVSEGHPDKVADQVSDGVLDAILATDPQARVACETLVSTGLVVISGEITTTAHPNYREIAQEVIRRIGYDNSDIGFDYKSCAVLAAINRQSADIAQGVNEGEGLDLDQGAGDQGLMFGYACNETPSLIPLPIYYAHRIMQRQSELRKDGRLNWLRPDAKSQLTVRYVDGKPVAIDTVVVSTQHSPEVSHAQITELVIEEIIKPVLPSALMQGEVRYLINPTGRFVIGGPHGDCGLTGRKIIVDTYGGAAHHGGGAFSGKDPSKVDRSAAYAGRWVAKNIVAAGLADRCEVQVAYAIGVARPVSMMIETFGTGRITDEKIVELVQRHFDLRPKAIIQELNLLRPIYGKTAAYGHFGRDEPEFTWEATDKAAALRADAGL.

ATP is bound at residue H16. Mg(2+) is bound at residue D18. E44 contributes to the K(+) binding site. The L-methionine site is built by E57 and Q100. Residues 100 to 110 (QSADIAQGVNE) are flexible loop. Residues 167–169 (DAK), 233–234 (RF), D242, 248–249 (RK), A265, and K269 contribute to the ATP site. Residue D242 participates in L-methionine binding. Residue K273 participates in L-methionine binding.

This sequence belongs to the AdoMet synthase family. As to quaternary structure, homotetramer; dimer of dimers. Mg(2+) is required as a cofactor. The cofactor is K(+).

The protein resides in the cytoplasm. It carries out the reaction L-methionine + ATP + H2O = S-adenosyl-L-methionine + phosphate + diphosphate. The protein operates within amino-acid biosynthesis; S-adenosyl-L-methionine biosynthesis; S-adenosyl-L-methionine from L-methionine: step 1/1. Its function is as follows. Catalyzes the formation of S-adenosylmethionine (AdoMet) from methionine and ATP. The overall synthetic reaction is composed of two sequential steps, AdoMet formation and the subsequent tripolyphosphate hydrolysis which occurs prior to release of AdoMet from the enzyme. The sequence is that of S-adenosylmethionine synthase from Aromatoleum aromaticum (strain DSM 19018 / LMG 30748 / EbN1) (Azoarcus sp. (strain EbN1)).